We begin with the raw amino-acid sequence, 349 residues long: tRNA pseudouridine synthase D (349 aa).

A substrate-binding site is contributed by Phe27. The Nucleophile role is filled by Asp80. Asn129 contributes to the substrate binding site. In terms of domain architecture, TRUD spans 155–303 (GVPNYFGAQR…VEAARRAMLL (149 aa)). Phe329 lines the substrate pocket.

The protein belongs to the pseudouridine synthase TruD family.

The catalysed reaction is uridine(13) in tRNA = pseudouridine(13) in tRNA. In terms of biological role, responsible for synthesis of pseudouridine from uracil-13 in transfer RNAs. In Escherichia coli O127:H6 (strain E2348/69 / EPEC), this protein is tRNA pseudouridine synthase D.